Here is a 123-residue protein sequence, read N- to C-terminus: Small ribosomal subunit protein uS12 (123 aa).

Aspartate 89 carries the post-translational modification 3-methylthioaspartic acid.

Belongs to the universal ribosomal protein uS12 family. In terms of assembly, part of the 30S ribosomal subunit. Contacts proteins S8 and S17. May interact with IF1 in the 30S initiation complex.

In terms of biological role, with S4 and S5 plays an important role in translational accuracy. Its function is as follows. Interacts with and stabilizes bases of the 16S rRNA that are involved in tRNA selection in the A site and with the mRNA backbone. Located at the interface of the 30S and 50S subunits, it traverses the body of the 30S subunit contacting proteins on the other side and probably holding the rRNA structure together. The combined cluster of proteins S8, S12 and S17 appears to hold together the shoulder and platform of the 30S subunit. In Methylobacterium sp. (strain 4-46), this protein is Small ribosomal subunit protein uS12.